Here is a 61-residue protein sequence, read N- to C-terminus: UPF0434 protein MS0934 (61 aa).

It belongs to the UPF0434 family.

The chain is UPF0434 protein MS0934 from Mannheimia succiniciproducens (strain KCTC 0769BP / MBEL55E).